We begin with the raw amino-acid sequence, 798 residues long: Shutoff protein (798 aa).

Basic and acidic residues predominate over residues 1–14 (MESTADGDKARGEE). The segment at 1 to 123 (MESTADGDKA…SHSSDSELGC (123 aa)) is disordered. Positions 33 to 49 (APEDEHPDDGEPDEPAD) are enriched in acidic residues. Over residues 68–80 (GGRDAECDGEAAR) the composition is skewed to basic and acidic residues. Polar residues predominate over residues 86–105 (DESSAPTTPSTAVRRSSGES). The interval 309 to 376 (LMEVLLQPFA…GRPLYRSARA (68 aa)) is binding to host EIF4G. The RRM domain occupies 379–497 (SVFREPSSIK…AIYALETPTE (119 aa)). A Phosphotyrosine; by host modification is found at tyrosine 711. The interval 740-798 (YADHARGAATSAEPSRALRPTSVATAAGNRTRGCSSARYRLGPTLRRRSNSSWPREWST) is disordered. Residues 789-798 (NSSWPREWST) are compositionally biased toward polar residues.

Belongs to the adenoviridae shutoff protein family. In terms of assembly, monomer. Interacts with hexon protein; this interaction allows chaperoning and trimerization of hexon proteins. Interacts (via N-terminus) with host initiation factor EIF4G (via C-terminus). Interacts (via RRM domain) with viral mRNAs that contain the tripartite leader; this interaction allows ribosome shunting and expression of viral late mRNAs. In terms of processing, might be cleaved by the viral protease. Post-translationally, phosphorylated. Tyrosine phosphorylation enhances preferential binding to tripartite leader mRNAs and allows ribosome shunting. Methylated. Asymmetric dimethylation by host PRMT1 of the Arg/Gly-rich region may regulate shutoff protein binding to hexon and promote the capsid assembly in the nucleus.

Its subcellular location is the host cytoplasm. Functionally, protein that inhibits host translation while promoting late viral translation by ribosome shunting. Blocks host cap-dependent translation by binding to eIF4G, displacing MKNK1 from cap initiation complexes and preventing EIF4E phosphorylation. Binds to the tripartite leader sequence of viral late mRNAs and recruits host eIF4G, PABPC1/poly-A binding protein and 40S ribosomes subunits on viral mRNAs, allowing ribosome shunting and efficient translation of late viral mRNAs even though conventional translation via ribosome scanning from the cap has been shut off in the host cell. During assembly, acts as a chaperone protein that helps hexon proteins assembly into trimers. In Galliformes (FAdV-10), this protein is Shutoff protein.